A 549-amino-acid polypeptide reads, in one-letter code: Lipase 3 (549 aa).

The N-terminal stretch at Met1–Ala15 is a signal peptide. A disulfide bond links Cys75 and Cys112. The Acyl-ester intermediate role is filled by Ser224. The cysteines at positions 283 and 292 are disulfide-linked. Asn329 carries N-linked (GlcNAc...) asparagine glycosylation. Residue Glu356 is the Charge relay system of the active site. Asn366 carries N-linked (GlcNAc...) asparagine glycosylation. Catalysis depends on His464, which acts as the Charge relay system.

The protein belongs to the type-B carboxylesterase/lipase family. In terms of assembly, monomer and homodimer.

The catalysed reaction is a triacylglycerol + H2O = a diacylglycerol + a fatty acid + H(+). The sequence is that of Lipase 3 (LIP3) from Diutina rugosa (Yeast).